Reading from the N-terminus, the 246-residue chain is Biosynthetic peptidoglycan transglycosylase (246 aa).

The chain crosses the membrane as a helical span at residues 27 to 47; it reads VVFCFFFAVFALLLIFRFVPI.

It belongs to the glycosyltransferase 51 family.

The protein resides in the cell inner membrane. The catalysed reaction is [GlcNAc-(1-&gt;4)-Mur2Ac(oyl-L-Ala-gamma-D-Glu-L-Lys-D-Ala-D-Ala)](n)-di-trans,octa-cis-undecaprenyl diphosphate + beta-D-GlcNAc-(1-&gt;4)-Mur2Ac(oyl-L-Ala-gamma-D-Glu-L-Lys-D-Ala-D-Ala)-di-trans,octa-cis-undecaprenyl diphosphate = [GlcNAc-(1-&gt;4)-Mur2Ac(oyl-L-Ala-gamma-D-Glu-L-Lys-D-Ala-D-Ala)](n+1)-di-trans,octa-cis-undecaprenyl diphosphate + di-trans,octa-cis-undecaprenyl diphosphate + H(+). Its pathway is cell wall biogenesis; peptidoglycan biosynthesis. In terms of biological role, peptidoglycan polymerase that catalyzes glycan chain elongation from lipid-linked precursors. The protein is Biosynthetic peptidoglycan transglycosylase of Haemophilus influenzae (strain ATCC 51907 / DSM 11121 / KW20 / Rd).